We begin with the raw amino-acid sequence, 247 residues long: UDP-2,3-diacylglucosamine hydrolase (247 aa).

Mn(2+) contacts are provided by D8, H10, D41, N79, and H114. Residue 79 to 80 (NR) participates in substrate binding. Residues D122, S160, D171, R174, and H202 each contribute to the substrate site. Residues H202 and H204 each contribute to the Mn(2+) site.

The protein belongs to the LpxH family. Mn(2+) serves as cofactor.

The protein resides in the cell inner membrane. It catalyses the reaction UDP-2-N,3-O-bis[(3R)-3-hydroxytetradecanoyl]-alpha-D-glucosamine + H2O = 2-N,3-O-bis[(3R)-3-hydroxytetradecanoyl]-alpha-D-glucosaminyl 1-phosphate + UMP + 2 H(+). It participates in glycolipid biosynthesis; lipid IV(A) biosynthesis; lipid IV(A) from (3R)-3-hydroxytetradecanoyl-[acyl-carrier-protein] and UDP-N-acetyl-alpha-D-glucosamine: step 4/6. Its function is as follows. Hydrolyzes the pyrophosphate bond of UDP-2,3-diacylglucosamine to yield 2,3-diacylglucosamine 1-phosphate (lipid X) and UMP by catalyzing the attack of water at the alpha-P atom. Involved in the biosynthesis of lipid A, a phosphorylated glycolipid that anchors the lipopolysaccharide to the outer membrane of the cell. This chain is UDP-2,3-diacylglucosamine hydrolase, found in Xanthomonas axonopodis pv. citri (strain 306).